A 355-amino-acid chain; its full sequence is 12-oxophytodienoate reductase-like protein (355 aa).

FMN-binding positions include 30 to 32 (ALT), A63, and Q105. 175–178 (NASS) contributes to the substrate binding site. Y181 functions as the Proton donor in the catalytic mechanism. R265 contacts substrate. Residues G288 and 309–310 (GR) each bind FMN.

The protein belongs to the NADH:flavin oxidoreductase/NADH oxidase family. FMN serves as cofactor. In terms of tissue distribution, weakly expressed in flowers and roots.

The protein localises to the cytoplasm. May be involved in the biosynthesis or metabolism of oxylipin signaling molecules. This is 12-oxophytodienoate reductase-like protein (OPR2) from Solanum lycopersicum (Tomato).